A 233-amino-acid chain; its full sequence is tRNA (guanine-N(7)-)-methyltransferase (233 aa).

Positions 62, 87, 114, and 136 each coordinate S-adenosyl-L-methionine. Residue Asp-136 is part of the active site. Substrate is bound by residues Lys-140, Asp-172, and 211 to 214 (TRYE).

Belongs to the class I-like SAM-binding methyltransferase superfamily. TrmB family.

It carries out the reaction guanosine(46) in tRNA + S-adenosyl-L-methionine = N(7)-methylguanosine(46) in tRNA + S-adenosyl-L-homocysteine. Its pathway is tRNA modification; N(7)-methylguanine-tRNA biosynthesis. Functionally, catalyzes the formation of N(7)-methylguanine at position 46 (m7G46) in tRNA. The protein is tRNA (guanine-N(7)-)-methyltransferase of Erythrobacter litoralis (strain HTCC2594).